The primary structure comprises 869 residues: Bifunctional uridylyltransferase/uridylyl-removing enzyme (869 aa).

The interval 1–332 (MTDAPAERPD…QFDGEATPES (332 aa)) is uridylyltransferase. The interval 333–691 (LGGGFSLRRG…RRAVPDNDAL (359 aa)) is uridylyl-removing. Residues 450-572 (VDQHTLMVLR…VGTRERLDYL (123 aa)) enclose the HD domain. 2 ACT domains span residues 692 to 774 (EVFV…RAVP) and 798 to 869 (RISL…LDPV).

This sequence belongs to the GlnD family. Mg(2+) is required as a cofactor.

The enzyme catalyses [protein-PII]-L-tyrosine + UTP = [protein-PII]-uridylyl-L-tyrosine + diphosphate. It carries out the reaction [protein-PII]-uridylyl-L-tyrosine + H2O = [protein-PII]-L-tyrosine + UMP + H(+). Its activity is regulated as follows. Uridylyltransferase (UTase) activity is inhibited by glutamine, while glutamine activates uridylyl-removing (UR) activity. Functionally, modifies, by uridylylation and deuridylylation, the PII regulatory proteins (GlnB and homologs), in response to the nitrogen status of the cell that GlnD senses through the glutamine level. Under low glutamine levels, catalyzes the conversion of the PII proteins and UTP to PII-UMP and PPi, while under higher glutamine levels, GlnD hydrolyzes PII-UMP to PII and UMP (deuridylylation). Thus, controls uridylylation state and activity of the PII proteins, and plays an important role in the regulation of nitrogen assimilation and metabolism. This Xanthomonas oryzae pv. oryzae (strain MAFF 311018) protein is Bifunctional uridylyltransferase/uridylyl-removing enzyme.